A 205-amino-acid chain; its full sequence is Outer-membrane lipoprotein carrier protein (205 aa).

The first 19 residues, 1-19 (MKKIIICFIFVFSINVSFA), serve as a signal peptide directing secretion.

The protein belongs to the LolA family. Monomer.

Its subcellular location is the periplasm. Participates in the translocation of lipoproteins from the inner membrane to the outer membrane. Only forms a complex with a lipoprotein if the residue after the N-terminal Cys is not an aspartate (The Asp acts as a targeting signal to indicate that the lipoprotein should stay in the inner membrane). In Francisella tularensis subsp. tularensis (strain FSC 198), this protein is Outer-membrane lipoprotein carrier protein.